A 248-amino-acid polypeptide reads, in one-letter code: tRNA pseudouridine synthase A (248 aa).

Asp55 functions as the Nucleophile in the catalytic mechanism. Residue Tyr114 coordinates substrate.

It belongs to the tRNA pseudouridine synthase TruA family. As to quaternary structure, homodimer.

The enzyme catalyses uridine(38/39/40) in tRNA = pseudouridine(38/39/40) in tRNA. Its function is as follows. Formation of pseudouridine at positions 38, 39 and 40 in the anticodon stem and loop of transfer RNAs. This is tRNA pseudouridine synthase A from Rhodopseudomonas palustris (strain ATCC BAA-98 / CGA009).